The chain runs to 131 residues: Aspartate 1-decarboxylase (131 aa).

Serine 25 acts as the Schiff-base intermediate with substrate; via pyruvic acid in catalysis. Serine 25 carries the post-translational modification Pyruvic acid (Ser). Threonine 57 contributes to the substrate binding site. Tyrosine 58 (proton donor) is an active-site residue. 73 to 75 contacts substrate; that stretch reads GAA. The tract at residues 112-131 is disordered; the sequence is NVPTTQKSENPGQGSLRNAI. The segment covering 113 to 131 has biased composition (polar residues); it reads VPTTQKSENPGQGSLRNAI.

It belongs to the PanD family. In terms of assembly, heterooctamer of four alpha and four beta subunits. Requires pyruvate as cofactor. Post-translationally, is synthesized initially as an inactive proenzyme, which is activated by self-cleavage at a specific serine bond to produce a beta-subunit with a hydroxyl group at its C-terminus and an alpha-subunit with a pyruvoyl group at its N-terminus.

It is found in the cytoplasm. The enzyme catalyses L-aspartate + H(+) = beta-alanine + CO2. It functions in the pathway cofactor biosynthesis; (R)-pantothenate biosynthesis; beta-alanine from L-aspartate: step 1/1. Functionally, catalyzes the pyruvoyl-dependent decarboxylation of aspartate to produce beta-alanine. The protein is Aspartate 1-decarboxylase of Syntrophotalea carbinolica (strain DSM 2380 / NBRC 103641 / GraBd1) (Pelobacter carbinolicus).